The primary structure comprises 891 residues: DNA mismatch repair protein MutS (891 aa).

Residue 643-650 (GPNMGGKS) participates in ATP binding.

Belongs to the DNA mismatch repair MutS family.

In terms of biological role, this protein is involved in the repair of mismatches in DNA. It is possible that it carries out the mismatch recognition step. This protein has a weak ATPase activity. This is DNA mismatch repair protein MutS from Xanthomonas campestris pv. campestris (strain ATCC 33913 / DSM 3586 / NCPPB 528 / LMG 568 / P 25).